The chain runs to 233 residues: Small ribosomal subunit protein uS7m (233 aa).

A mitochondrion-targeting transit peptide spans 1–28; sequence MAAPTAAGLCPRLRAWLPRLTQVRWSRY.

This sequence belongs to the universal ribosomal protein uS7 family. In terms of assembly, component of the mitochondrial ribosome small subunit (28S) which comprises a 12S rRNA and about 30 distinct proteins.

The protein resides in the mitochondrion. The polypeptide is Small ribosomal subunit protein uS7m (MRPS7) (Gallus gallus (Chicken)).